A 282-amino-acid polypeptide reads, in one-letter code: Lipoyl synthase (282 aa).

Residues cysteine 37, cysteine 42, cysteine 48, cysteine 63, cysteine 67, cysteine 70, and serine 275 each coordinate [4Fe-4S] cluster. One can recognise a Radical SAM core domain in the interval 49 to 264; sequence WSRGTATFMI…RLVGIEKGFR (216 aa).

This sequence belongs to the radical SAM superfamily. Lipoyl synthase family. Requires [4Fe-4S] cluster as cofactor.

Its subcellular location is the cytoplasm. It carries out the reaction [[Fe-S] cluster scaffold protein carrying a second [4Fe-4S](2+) cluster] + N(6)-octanoyl-L-lysyl-[protein] + 2 oxidized [2Fe-2S]-[ferredoxin] + 2 S-adenosyl-L-methionine + 4 H(+) = [[Fe-S] cluster scaffold protein] + N(6)-[(R)-dihydrolipoyl]-L-lysyl-[protein] + 4 Fe(3+) + 2 hydrogen sulfide + 2 5'-deoxyadenosine + 2 L-methionine + 2 reduced [2Fe-2S]-[ferredoxin]. Its pathway is protein modification; protein lipoylation via endogenous pathway; protein N(6)-(lipoyl)lysine from octanoyl-[acyl-carrier-protein]: step 2/2. Catalyzes the radical-mediated insertion of two sulfur atoms into the C-6 and C-8 positions of the octanoyl moiety bound to the lipoyl domains of lipoate-dependent enzymes, thereby converting the octanoylated domains into lipoylated derivatives. This Porphyromonas gingivalis (strain ATCC 33277 / DSM 20709 / CIP 103683 / JCM 12257 / NCTC 11834 / 2561) protein is Lipoyl synthase.